A 917-amino-acid polypeptide reads, in one-letter code: PAX3- and PAX7-binding protein 1 (917 aa).

A compositionally biased stretch (basic residues) spans methionine 1 to arginine 11. 3 disordered regions span residues methionine 1–lysine 123, leucine 143–serine 205, and arginine 229–phenylalanine 275. Serine 16 carries the phosphoserine modification. The span at serine 16–glutamate 28 shows a compositional bias: acidic residues. Gly residues-rich tracts occupy residues glutamate 40–alanine 50 and alanine 73–proline 85. Residue lysine 149 forms a Glycyl lysine isopeptide (Lys-Gly) (interchain with G-Cter in SUMO1); alternate linkage. Lysine 149 participates in a covalent cross-link: Glycyl lysine isopeptide (Lys-Gly) (interchain with G-Cter in SUMO2); alternate. Serine 154, serine 155, and serine 158 each carry phosphoserine. Positions proline 161–asparagine 172 are enriched in basic and acidic residues. The span at glycine 183–lysine 193 shows a compositional bias: acidic residues. Serine 191 is modified (phosphoserine). Residues methionine 234–glutamate 256 show a composition bias toward basic and acidic residues. A compositionally biased stretch (acidic residues) spans aspartate 257–aspartate 268. Serine 262 and serine 295 each carry phosphoserine. 2 disordered regions span residues serine 362–asparagine 381 and alanine 530–serine 564. The segment at threonine 378–serine 558 is necessary and sufficient for interaction with PAX7. Residues alanine 542–glutamate 554 are compositionally biased toward basic and acidic residues. Residues serine 557 and serine 558 each carry the phosphoserine modification. Threonine 563 carries the phosphothreonine modification.

This sequence belongs to the GCF family. As to quaternary structure, interacts with PAX3 and PAX7. Interacts with WDR5; associates with a histone methyltransferase (HMT) complex composed at least of RBBP5, ASH2L, SET1, SET2 and KMT2A/MLL1, KMT2D/MLL2, KMT2C/MLL3 and KMT2B/MLL4 through direct interaction with WDR5. In terms of tissue distribution, ubiquitous.

The protein resides in the nucleus. Its function is as follows. Adapter protein linking the transcription factors PAX3 and PAX7 to the histone methylation machinery and involved in myogenesis. Associates with a histone methyltransferase complex that specifically mediates dimethylation and trimethylation of 'Lys-4' of histone H3. Mediates the recruitment of that complex to the transcription factors PAX3 and PAX7 on chromatin to regulate the expression of genes involved in muscle progenitor cells proliferation including ID3 and CDC20. In Homo sapiens (Human), this protein is PAX3- and PAX7-binding protein 1 (PAXBP1).